A 149-amino-acid chain; its full sequence is Calmodulin (149 aa).

Residue Ala-2 is modified to N-acetylalanine. 4 consecutive EF-hand domains span residues 8 to 43 (EQIAEFKEAFALFDKDGDGTITTKELGTVMRSLGQN), 44 to 79 (PTEAELQDMINEVDADGNGTIDFPEFLSLMARKMKE), 81 to 116 (DSEEELIEAFKVFDRDGNGLISAAELRHVMTNLGEK), and 117 to 149 (LTDDEVDEMIREADIDGDGHINYEEFVRMMVSK). Lys-14 carries the N6,N6-dimethyllysine modification. Ca(2+)-binding residues include Asp-21, Asp-23, Asp-25, Thr-27, Glu-32, Asp-57, Asp-59, Asn-61, Thr-63, Glu-68, Asp-94, Asp-96, Asn-98, and Glu-105. Position 116 is an N6,N6,N6-trimethyllysine (Lys-116). Residues Asp-130, Asp-132, Asp-134, His-136, and Glu-141 each contribute to the Ca(2+) site.

This sequence belongs to the calmodulin family. Post-translationally, the pantophobiac mutant CAM2 is undermethylated on Lys-116.

Functionally, calmodulin mediates the control of a large number of enzymes, ion channels and other proteins by Ca(2+). Among the enzymes to be stimulated by the calmodulin-Ca(2+) complex are a number of protein kinases and phosphatases. In Paramecium tetraurelia, this protein is Calmodulin (CAM).